Reading from the N-terminus, the 59-residue chain is MAETIKIKLVKSKIGTLPKQRQNLEALGLKKIGQVVEQKDNPQIRGMIDKVSHLVQVIE.

The protein belongs to the universal ribosomal protein uL30 family. In terms of assembly, part of the 50S ribosomal subunit.

The protein is Large ribosomal subunit protein uL30 of Alkaliphilus metalliredigens (strain QYMF).